The chain runs to 274 residues: MQKVVKLNNIKIGNDLPFVLITGPCQIEGKDHALFMAEKLVKLTSKLEIPFIYKSSFDKANRTSVHGIRGVGIEKGLEILSKVKSEFDCPIVTDVHSESQCTATAEVADILQIPAFLCRQTDLLQAAAKTGKIVKVKKGQFLAPWDMKNVQTKLETFGVKDILFTERGACFGYNNLVSDMRSLAIMAELNVPVVFDATHSVQQPGGLGGSTGGERKYVELLAKAATSVGIAGMYMEVHQDPDNAPSDGPCMMKLDNLESILIKLKKYDKITKEK.

The protein belongs to the KdsA family.

The protein localises to the cytoplasm. The enzyme catalyses D-arabinose 5-phosphate + phosphoenolpyruvate + H2O = 3-deoxy-alpha-D-manno-2-octulosonate-8-phosphate + phosphate. Its pathway is carbohydrate biosynthesis; 3-deoxy-D-manno-octulosonate biosynthesis; 3-deoxy-D-manno-octulosonate from D-ribulose 5-phosphate: step 2/3. The protein operates within bacterial outer membrane biogenesis; lipopolysaccharide biosynthesis. This chain is 2-dehydro-3-deoxyphosphooctonate aldolase, found in Rickettsia rickettsii (strain Iowa).